A 407-amino-acid chain; its full sequence is Peptidase T (407 aa).

His-82 provides a ligand contact to Zn(2+). Residue Asp-84 is part of the active site. A Zn(2+)-binding site is contributed by Asp-143. The active-site Proton acceptor is Glu-177. The Zn(2+) site is built by Glu-178, Asp-200, and His-382.

The protein belongs to the peptidase M20B family. Zn(2+) serves as cofactor.

It localises to the cytoplasm. The catalysed reaction is Release of the N-terminal residue from a tripeptide.. Cleaves the N-terminal amino acid of tripeptides. The protein is Peptidase T of Streptococcus pyogenes serotype M4 (strain MGAS10750).